We begin with the raw amino-acid sequence, 117 residues long: Large ribosomal subunit protein bL20 (117 aa).

Belongs to the bacterial ribosomal protein bL20 family.

Its function is as follows. Binds directly to 23S ribosomal RNA and is necessary for the in vitro assembly process of the 50S ribosomal subunit. It is not involved in the protein synthesizing functions of that subunit. This is Large ribosomal subunit protein bL20 from Geobacter metallireducens (strain ATCC 53774 / DSM 7210 / GS-15).